A 1853-amino-acid polypeptide reads, in one-letter code: DNA-directed RNA polymerase II subunit RPB1 (1853 aa).

8 residues coordinate Zn(2+): cysteine 66, cysteine 69, cysteine 76, histidine 79, cysteine 106, cysteine 109, cysteine 149, and cysteine 177. The segment at 256-268 (PAVVTFGSAKNQD) is lid loop. A rudder loop region spans residues 314 to 331 (NCIPGLPTATQKGGRPLK). Mg(2+) contacts are provided by aspartate 489, aspartate 491, and aspartate 493. The interval 827-839 (PSEFFFHAMGGRE) is bridging helix. A Glycyl lysine isopeptide (Lys-Gly) (interchain with G-Cter in ubiquitin) cross-link involves residue lysine 1260. Disordered regions lie at residues 1520-1568 (PWSP…PRTP) and 1589-1853 (SPHY…DPQN). Composition is skewed to low complexity over residues 1589–1811 (SPHY…TPSP) and 1821–1853 (YSPS…DPQN). Repeat copies occupy residues 1592 to 1598 (YSPTSPS), 1599 to 1605 (YSPTSPA), 1616 to 1622 (YSPTSPS), 1623 to 1629 (YSPTSPS), 1630 to 1636 (YSPTSPS), 1637 to 1643 (YSPTSPS), 1644 to 1650 (YSPTSPS), 1651 to 1657 (YSPTSPS), 1658 to 1664 (YSPTSPS), 1665 to 1671 (YSPTSPS), 1679 to 1685 (YSPTSPT), 1686 to 1692 (YSPTSPT), 1693 to 1699 (YSPTSPT), 1700 to 1706 (YSPTSPT), 1707 to 1713 (YSPTSPS), 1717 to 1723 (YSPSSPK), 1724 to 1730 (YSPSSPT), 1731 to 1737 (YSPTSPS), 1752 to 1758 (YSPSSPT), 1759 to 1765 (YTPSSPT), 1779 to 1785 (YSPTSPT), 1786 to 1792 (YSPTSPS), 1800 to 1806 (YSPTSPT), 1821 to 1827 (YSPSSPT), 1828 to 1834 (YSPSSPT), and 1842 to 1848 (YSPSSPT). Positions 1592-1848 (YSPTSPSYSP…SPSYSPSSPT (257 aa)) are C-terminal domain (CTD); 26 X 7 AA approximate tandem repeats of Y-[ST]-P-[ST]-S-P-[AGKNQRST].

The protein belongs to the RNA polymerase beta' chain family. As to quaternary structure, component of the RNA polymerase II (Pol II) complex consisting of 12 subunits. Interacts with sig-7. The tandem 7 residues repeats in the C-terminal domain (CTD) can be highly phosphorylated. The phosphorylation activates Pol II. Phosphorylation occurs mainly at residues 'Ser-2' and 'Ser-5' of the heptapeptide repeat and starts at the 3- to 4-cell embryonic stage. This phosphorylation also occurs in the early stages of oocyte development and is not detected in oocytes arrested at the meiotic diakinesis stage. In the somatic lineage, phosphorylation at 'Ser-2' is mediated by cdk-12 downstream of cdk-9 whereas in the germline lineage cdk-12 phosphorylates 'Ser-2' independently of cdk-9. Phosphorylation is likely mediated by cdk-7. May be dephosphorylated by fcp-1 in diakinetic oocytes and in 1-cell and 2-cell embryos. Dephosphorylated at 'Ser-5' of the heptapeptide repeat by ssup-72. The phosphorylation state is believed to result from the balanced action of site-specific CTD kinases and phosphatase, and a 'CTD code' that specifies the position of Pol II within the transcription cycle has been proposed. In terms of processing, following transcription stress, the elongating form of RNA polymerase II (RNA pol IIo) is polyubiquitinated via 'Lys-63'-linkages on Lys-1260 at DNA damage sites without leading to degradation: ubiquitination promotes RNA pol IIo backtracking to allow access by the transcription-coupled nucleotide excision repair (TC-NER) machinery. Subsequent DEF1-dependent polyubiquitination by the elongin complex via 'Lys-48'-linkages may lead to proteasome-mediated degradation; presumably at stalled RNA pol II where TC-NER has failed, to halt global transcription and enable 'last resort' DNA repair pathways.

Its subcellular location is the nucleus. The protein localises to the chromosome. It carries out the reaction RNA(n) + a ribonucleoside 5'-triphosphate = RNA(n+1) + diphosphate. Its function is as follows. DNA-dependent RNA polymerase catalyzes the transcription of DNA into RNA using the four ribonucleoside triphosphates as substrates. Largest and catalytic component of RNA polymerase II which synthesizes mRNA precursors and many functional non-coding RNAs. Forms the polymerase active center together with the second largest subunit. Pol II is the central component of the basal RNA polymerase II transcription machinery. It is composed of mobile elements that move relative to each other. RPB1 is part of the core element with the central large cleft, the clamp element that moves to open and close the cleft and the jaws that are thought to grab the incoming DNA template. At the start of transcription, a single-stranded DNA template strand of the promoter is positioned within the central active site cleft of Pol II. A bridging helix emanates from RPB1 and crosses the cleft near the catalytic site and is thought to promote translocation of Pol II by acting as a ratchet that moves the RNA-DNA hybrid through the active site by switching from straight to bent conformations at each step of nucleotide addition. During transcription elongation, Pol II moves on the template as the transcript elongates. Elongation is influenced by the phosphorylation status of the C-terminal domain (CTD) of Pol II largest subunit (RPB1), which serves as a platform for assembly of factors that regulate transcription initiation, elongation, termination and mRNA processing. Involved in the transcription of several genes including those involved in embryogenesis. The polypeptide is DNA-directed RNA polymerase II subunit RPB1 (Caenorhabditis briggsae).